We begin with the raw amino-acid sequence, 477 residues long: Mitochondrial adenyl nucleotide antiporter SLC25A24 (477 aa).

The tract at residues 1–173 (MLRWLRDFVL…RFWKHSTGID (173 aa)) is regulatory N-terminal domain. Residues 1-197 (MLRWLRDFVL…EKKSGQWWRQ (197 aa)) lie on the Mitochondrial intermembrane side of the membrane. 4 EF-hand domains span residues 19–54 (EQPT…LGIP), 55–88 (LGQD…KDHE), 86–121 (DHEK…LGLT), and 122–157 (ISEQ…NPVT). 20 residues coordinate Ca(2+): Asp32, Asn34, Asp36, Val38, Glu43, Asp68, Asn70, Asp72, Lys74, Glu79, Asp99, Asn101, Asp103, Lys105, Glu110, Asp135, Asp137, Thr139, Thr141, and Glu146. A linker region region spans residues 159–168 (IEEIIRFWKH). Residues 174–477 (IGDSLTIPDE…MKQTLGVTQK (304 aa)) are C-terminal transmembrane transporter domain. Solcar repeat units follow at residues 192-278 (GQWW…YKKL), 286-371 (IGTF…LKSY), and 383-471 (PGVM…MKQT). Residues 198-215 (LLAGGIAGAVSRTSTAPL) form a helical membrane-spanning segment. Residues 216-252 (DRLKIMMQVHGSKSDKMNIFGGFRQMVKEGGIRSLWR) lie on the Mitochondrial matrix side of the membrane. Residues 253 to 272 (GNGTNVIKIAPETAVKFWAY) form a helical membrane-spanning segment. Residues 273 to 295 (EQYKKLLTEEGQKIGTFERFISG) lie on the Mitochondrial intermembrane side of the membrane. A helical transmembrane segment spans residues 296-309 (SMAGATAQTFIYPM). Topologically, residues 310 to 345 (EVMKTRLAVGKTGQYSGIYDCAKKILKHEGLGAFYK) are mitochondrial matrix. At Lys320 the chain carries N6-acetyllysine; alternate. Position 320 is an N6-succinyllysine; alternate (Lys320). Lys336 carries the N6-acetyllysine modification. Residues 346–365 (GYVPNLLGIIPYAGIDLAVY) traverse the membrane as a helical segment. Residues 366 to 388 (ELLKSYWLDNFAKDSVNPGVMVL) lie on the Mitochondrial intermembrane side of the membrane. A helical transmembrane segment spans residues 389 to 406 (LGCGALSSTCGQLASYPL). Over 407–445 (ALVRTRMQAQAMLEGSPQLNMVGLFRRIISKEGIPGLYR) the chain is Mitochondrial matrix. At Lys437 the chain carries N6-acetyllysine; alternate. Lys437 carries the post-translational modification N6-succinyllysine; alternate. The helical transmembrane segment at 446–465 (GITPNFMKVLPAVGISYVVY) threads the bilayer. The Mitochondrial intermembrane portion of the chain corresponds to 466-477 (ENMKQTLGVTQK).

It belongs to the mitochondrial carrier (TC 2.A.29) family. In terms of assembly, monomer. In terms of tissue distribution, expressed in all tissues tested. Highly expressed in testis, expressed at intermediate level in small intestine and pancreas, and weakly expressed in kidney, spleen, liver, skeletal muscle and heart.

The protein resides in the mitochondrion inner membrane. It catalyses the reaction Mg(2+)(out) + phosphate(in) + ATP(out) = Mg(2+)(in) + phosphate(out) + ATP(in). It carries out the reaction ADP(out) + phosphate(in) + H(+)(out) = ADP(in) + phosphate(out) + H(+)(in). The enzyme catalyses AMP(out) + phosphate(in) = AMP(in) + phosphate(out). The catalysed reaction is phosphate(in) + ATP(out) + 2 H(+)(out) = phosphate(out) + ATP(in) + 2 H(+)(in). It catalyses the reaction dADP(in) + ADP(out) = dADP(out) + ADP(in). It carries out the reaction Mg(2+)(in) + ADP(out) + ATP(in) + H(+)(out) = Mg(2+)(out) + ADP(in) + ATP(out) + H(+)(in). The enzyme catalyses ADP(out) + diphosphate(in) = ADP(in) + diphosphate(out). The catalysed reaction is dAMP(in) + ADP(out) + H(+)(out) = dAMP(out) + ADP(in) + H(+)(in). It catalyses the reaction 3'-AMP(in) + ADP(out) + H(+)(out) = 3'-AMP(out) + ADP(in) + H(+)(in). It carries out the reaction dAMP(out) + phosphate(in) = dAMP(in) + phosphate(out). The enzyme catalyses 3'-AMP(out) + phosphate(in) = 3'-AMP(in) + phosphate(out). The catalysed reaction is dADP(out) + phosphate(in) + H(+)(out) = dADP(in) + phosphate(out) + H(+)(in). With respect to regulation, activated by an increase in cytosolic calcium levels that induce a conformational change of the N-terminal regulatory domain, uncapping the channel and allowing transport. Inhibited by bathophenanthroline, mersalyl, p-hydroxymercuribenzoate, bromcresol purple and tannic acid. Functionally, electroneutral antiporter that mediates the transport of adenyl nucleotides through the inner mitochondrial membrane. Originally identified as an ATP-magnesium/inorganic phosphate antiporter, it also acts as a broad specificity adenyl nucleotide antiporter. By regulating the mitochondrial matrix adenyl nucleotide pool could adapt to changing cellular energetic demands and indirectly regulate adenyl nucleotide-dependent metabolic pathways. In vitro, a low activity is also observed with guanyl and pyrimidine nucleotides. May play a role in protecting cells against oxidative stress-induced cell death, by buffering calcium levels in the mitochondrial matrix through the formation of calcium-phosphate precipitates. The sequence is that of Mitochondrial adenyl nucleotide antiporter SLC25A24 from Homo sapiens (Human).